The following is a 130-amino-acid chain: Small ribosomal subunit protein uS8 (130 aa).

This sequence belongs to the universal ribosomal protein uS8 family. Part of the 30S ribosomal subunit. Contacts proteins S5 and S12.

Its function is as follows. One of the primary rRNA binding proteins, it binds directly to 16S rRNA central domain where it helps coordinate assembly of the platform of the 30S subunit. The sequence is that of Small ribosomal subunit protein uS8 from Cronobacter sakazakii (strain ATCC BAA-894) (Enterobacter sakazakii).